A 60-amino-acid polypeptide reads, in one-letter code: Cytotoxin 5 (60 aa).

Intrachain disulfides connect Cys-3–Cys-21, Cys-14–Cys-38, Cys-42–Cys-53, and Cys-54–Cys-59.

The protein belongs to the three-finger toxin family. Short-chain subfamily. Type IA cytotoxin sub-subfamily. As to quaternary structure, monomer in solution; Homodimer and oligomer in the presence of negatively charged lipids forming a pore with a size ranging between 20 and 30 Angstroms. In terms of tissue distribution, expressed by the venom gland.

It localises to the secreted. Its subcellular location is the target cell membrane. Shows cytolytic activity on many different cells by forming pore in lipid membranes. In vivo, increases heart rate or kills the animal by cardiac arrest. In addition, it binds to heparin with high affinity, interacts with Kv channel-interacting protein 1 (KCNIP1) in a calcium-independent manner, and binds to integrin alpha-V/beta-3 (ITGAV/ITGB3) with moderate affinity. This is Cytotoxin 5 from Naja mossambica (Mozambique spitting cobra).